Here is a 192-residue protein sequence, read N- to C-terminus: Molybdenum cofactor guanylyltransferase (192 aa).

Residues 10–12 (LAG), Lys-23, Asn-51, Asp-69, and Asp-99 each bind GTP. Asp-99 provides a ligand contact to Mg(2+).

It belongs to the MobA family. Monomer. The cofactor is Mg(2+).

Its subcellular location is the cytoplasm. It catalyses the reaction Mo-molybdopterin + GTP + H(+) = Mo-molybdopterin guanine dinucleotide + diphosphate. Its function is as follows. Transfers a GMP moiety from GTP to Mo-molybdopterin (Mo-MPT) cofactor (Moco or molybdenum cofactor) to form Mo-molybdopterin guanine dinucleotide (Mo-MGD) cofactor. This Haemophilus influenzae (strain 86-028NP) protein is Molybdenum cofactor guanylyltransferase.